Consider the following 186-residue polypeptide: Cysteine protease inhibitor 10 (186 aa).

An N-terminal signal peptide occupies residues 1–7; that stretch reads TCHDDDN. Cystine bridges form between cysteine 49-cysteine 101 and cysteine 149-cysteine 155.

The protein belongs to the protease inhibitor I3 (leguminous Kunitz-type inhibitor) family.

The protein localises to the vacuole. In terms of biological role, probable inhibitor of cysteine proteases. May protect the plant by inhibiting proteases of invading organisms. This Solanum tuberosum (Potato) protein is Cysteine protease inhibitor 10.